The following is a 556-amino-acid chain: Serine beta-lactamase-like protein LACTB, mitochondrial (556 aa).

A mitochondrion-targeting transit peptide spans 1–117; the sequence is MYRLLSAVMA…RAIDSSRDLL (117 aa). The active-site Acyl-ester intermediate is the serine 166. Residues 249 to 282 show a composition bias toward basic and acidic residues; that stretch reads ESDQEKELKEKGGKSNEKNDFAKAKVEQDNETKG. The interval 249 to 290 is disordered; it reads ESDQEKELKEKGGKSNEKNDFAKAKVEQDNETKGRNSKPCKK. Lysine 290 and lysine 291 each carry N6-succinyllysine. Residues lysine 304 and lysine 349 each carry the N6-acetyllysine modification.

Belongs to the peptidase S12 family.

The protein localises to the mitochondrion. Its function is as follows. Mitochondrial serine protease that acts as a regulator of mitochondrial lipid metabolism. Acts by decreasing protein levels of PISD, a mitochondrial enzyme that converts phosphatidylserine (PtdSer) to phosphatidylethanolamine (PtdEtn), thereby affecting mitochondrial lipid metabolism. It is unclear whether it acts directly by mediating proteolysis of PISD or by mediating proteolysis of another lipid metabolism protein. This Bos taurus (Bovine) protein is Serine beta-lactamase-like protein LACTB, mitochondrial.